The sequence spans 235 residues: 5'-methylthioadenosine/S-adenosylhomocysteine nucleosidase (235 aa).

Glu-12 serves as the catalytic Proton acceptor. Substrate contacts are provided by residues Gly-78, Ile-152, and 173–174; that span reads ME. The active-site Proton donor is Asp-197.

The protein belongs to the PNP/UDP phosphorylase family. MtnN subfamily. Homodimer.

The catalysed reaction is S-adenosyl-L-homocysteine + H2O = S-(5-deoxy-D-ribos-5-yl)-L-homocysteine + adenine. It catalyses the reaction S-methyl-5'-thioadenosine + H2O = 5-(methylsulfanyl)-D-ribose + adenine. The enzyme catalyses 5'-deoxyadenosine + H2O = 5-deoxy-D-ribose + adenine. It participates in amino-acid biosynthesis; L-methionine biosynthesis via salvage pathway; S-methyl-5-thio-alpha-D-ribose 1-phosphate from S-methyl-5'-thioadenosine (hydrolase route): step 1/2. Functionally, catalyzes the irreversible cleavage of the glycosidic bond in both 5'-methylthioadenosine (MTA) and S-adenosylhomocysteine (SAH/AdoHcy) to adenine and the corresponding thioribose, 5'-methylthioribose and S-ribosylhomocysteine, respectively. Also cleaves 5'-deoxyadenosine, a toxic by-product of radical S-adenosylmethionine (SAM) enzymes, into 5-deoxyribose and adenine. Thus, is required for in vivo function of the radical SAM enzymes biotin synthase and lipoic acid synthase, that are inhibited by 5'-deoxyadenosine accumulation. The protein is 5'-methylthioadenosine/S-adenosylhomocysteine nucleosidase of Buchnera aphidicola subsp. Schizaphis graminum (strain Sg).